The following is a 280-amino-acid chain: Undecaprenyl-diphosphatase (280 aa).

The next 8 helical transmembrane spans lie at 3 to 23 (IILL…EFLP), 45 to 65 (VDLF…YDYW), 88 to 108 (QLGL…FTFA), 115 to 135 (LFNP…IFYV), 150 to 170 (VSLK…IPGT), 191 to 211 (AEFS…LDFI), 225 to 245 (VLGI…RLLV), and 255 to 275 (IFAW…WGFG).

This sequence belongs to the UppP family.

It localises to the cell inner membrane. The catalysed reaction is di-trans,octa-cis-undecaprenyl diphosphate + H2O = di-trans,octa-cis-undecaprenyl phosphate + phosphate + H(+). Functionally, catalyzes the dephosphorylation of undecaprenyl diphosphate (UPP). Confers resistance to bacitracin. This is Undecaprenyl-diphosphatase from Psychrobacter cryohalolentis (strain ATCC BAA-1226 / DSM 17306 / VKM B-2378 / K5).